A 227-amino-acid polypeptide reads, in one-letter code: ATP-dependent dethiobiotin synthetase BioD (227 aa).

12 to 17 (DVGKTV) is a binding site for ATP. Mg(2+) is bound at residue T16. Residue K37 is part of the active site. T41 provides a ligand contact to substrate. Residues D50, 110–113 (EGAG), 171–172 (GS), and 201–203 (PAG) each bind ATP. Positions 50 and 110 each coordinate Mg(2+).

Belongs to the dethiobiotin synthetase family. Homodimer. It depends on Mg(2+) as a cofactor.

It localises to the cytoplasm. It carries out the reaction (7R,8S)-7,8-diammoniononanoate + CO2 + ATP = (4R,5S)-dethiobiotin + ADP + phosphate + 3 H(+). It participates in cofactor biosynthesis; biotin biosynthesis; biotin from 7,8-diaminononanoate: step 1/2. Functionally, catalyzes a mechanistically unusual reaction, the ATP-dependent insertion of CO2 between the N7 and N8 nitrogen atoms of 7,8-diaminopelargonic acid (DAPA, also called 7,8-diammoniononanoate) to form a ureido ring. The sequence is that of ATP-dependent dethiobiotin synthetase BioD from Rhodococcus erythropolis (strain PR4 / NBRC 100887).